The sequence spans 355 residues: MKRDIQYLLNPALQNIATYRVEGGQQAEIKLNQNESPFDVPMWLKEEITGEFIKEPWNRYPDILPYRGMQVYADFLGISPDSVMMSNGSNEMLYTIFLACLGPGRKVLIPDPSFSLYEKIALLLQSQIVTVPMLPDLDFDLEAILRTAHDEAVDFIVISTPNNPTGKSLTFEEVRLIAQSSDAIVLVDEAYIEFSRQRSVLELIDELPNLVVLRTMSKAIALAGIRIGFALANPLLMAEIAKPKIPFASSRLAEITLSMVLANYSLVTDAVSYILHEREKLYTAMLTIDGVEPFVSDTNFLIIRVSDAGSVFQNLQSQGILVRNVSGYRLMENCLRFNVGLVDENQQLIAKLRQF.

At Lys-218 the chain carries N6-(pyridoxal phosphate)lysine.

Belongs to the class-II pyridoxal-phosphate-dependent aminotransferase family. Histidinol-phosphate aminotransferase subfamily. In terms of assembly, homodimer. The cofactor is pyridoxal 5'-phosphate.

It catalyses the reaction L-histidinol phosphate + 2-oxoglutarate = 3-(imidazol-4-yl)-2-oxopropyl phosphate + L-glutamate. The protein operates within amino-acid biosynthesis; L-histidine biosynthesis; L-histidine from 5-phospho-alpha-D-ribose 1-diphosphate: step 7/9. The protein is Histidinol-phosphate aminotransferase of Pelodictyon phaeoclathratiforme (strain DSM 5477 / BU-1).